A 216-amino-acid chain; its full sequence is 3-isopropylmalate dehydratase small subunit (216 aa).

This sequence belongs to the LeuD family. LeuD type 1 subfamily. Heterodimer of LeuC and LeuD.

The catalysed reaction is (2R,3S)-3-isopropylmalate = (2S)-2-isopropylmalate. Its pathway is amino-acid biosynthesis; L-leucine biosynthesis; L-leucine from 3-methyl-2-oxobutanoate: step 2/4. Its function is as follows. Catalyzes the isomerization between 2-isopropylmalate and 3-isopropylmalate, via the formation of 2-isopropylmaleate. This chain is 3-isopropylmalate dehydratase small subunit, found in Psychrobacter arcticus (strain DSM 17307 / VKM B-2377 / 273-4).